Here is a 326-residue protein sequence, read N- to C-terminus: 4-hydroxy-3-methylbut-2-enyl diphosphate reductase (326 aa).

[4Fe-4S] cluster is bound at residue cysteine 22. Positions 51 and 84 each coordinate (2E)-4-hydroxy-3-methylbut-2-enyl diphosphate. Histidine 51 and histidine 84 together coordinate dimethylallyl diphosphate. Residues histidine 51 and histidine 84 each contribute to the isopentenyl diphosphate site. Cysteine 106 contributes to the [4Fe-4S] cluster binding site. Histidine 134 is a (2E)-4-hydroxy-3-methylbut-2-enyl diphosphate binding site. Histidine 134 provides a ligand contact to dimethylallyl diphosphate. Histidine 134 is an isopentenyl diphosphate binding site. Residue glutamate 136 is the Proton donor of the active site. Threonine 174 is a (2E)-4-hydroxy-3-methylbut-2-enyl diphosphate binding site. Cysteine 204 provides a ligand contact to [4Fe-4S] cluster. Positions 232, 233, 234, and 276 each coordinate (2E)-4-hydroxy-3-methylbut-2-enyl diphosphate. Serine 232, serine 233, asparagine 234, and serine 276 together coordinate dimethylallyl diphosphate. Isopentenyl diphosphate is bound by residues serine 232, serine 233, asparagine 234, and serine 276.

It belongs to the IspH family. It depends on [4Fe-4S] cluster as a cofactor.

It catalyses the reaction isopentenyl diphosphate + 2 oxidized [2Fe-2S]-[ferredoxin] + H2O = (2E)-4-hydroxy-3-methylbut-2-enyl diphosphate + 2 reduced [2Fe-2S]-[ferredoxin] + 2 H(+). The enzyme catalyses dimethylallyl diphosphate + 2 oxidized [2Fe-2S]-[ferredoxin] + H2O = (2E)-4-hydroxy-3-methylbut-2-enyl diphosphate + 2 reduced [2Fe-2S]-[ferredoxin] + 2 H(+). Its pathway is isoprenoid biosynthesis; dimethylallyl diphosphate biosynthesis; dimethylallyl diphosphate from (2E)-4-hydroxy-3-methylbutenyl diphosphate: step 1/1. It functions in the pathway isoprenoid biosynthesis; isopentenyl diphosphate biosynthesis via DXP pathway; isopentenyl diphosphate from 1-deoxy-D-xylulose 5-phosphate: step 6/6. Functionally, catalyzes the conversion of 1-hydroxy-2-methyl-2-(E)-butenyl 4-diphosphate (HMBPP) into a mixture of isopentenyl diphosphate (IPP) and dimethylallyl diphosphate (DMAPP). Acts in the terminal step of the DOXP/MEP pathway for isoprenoid precursor biosynthesis. The chain is 4-hydroxy-3-methylbut-2-enyl diphosphate reductase from Bordetella parapertussis (strain 12822 / ATCC BAA-587 / NCTC 13253).